Here is a 666-residue protein sequence, read N- to C-terminus: UvrABC system protein B (666 aa).

The region spanning 26 to 414 (DSFQKGEKKV…KVVEQIIRPT (389 aa)) is the Helicase ATP-binding domain. 39–46 (GVTGSGKT) contacts ATP. A Beta-hairpin motif is present at residues 92–115 (YYDYYQPEAYVPSSDTFIEKDSSI). The region spanning 429 to 591 (QIEDLLVEIR…ITPLTIKKEV (163 aa)) is the Helicase C-terminal domain. Residues 625–660 (EVLKEKLREEMMKAAKELDFERAAILRDKMLSIQTE) form the UVR domain.

It belongs to the UvrB family. Forms a heterotetramer with UvrA during the search for lesions. Interacts with UvrC in an incision complex.

The protein localises to the cytoplasm. In terms of biological role, the UvrABC repair system catalyzes the recognition and processing of DNA lesions. A damage recognition complex composed of 2 UvrA and 2 UvrB subunits scans DNA for abnormalities. Upon binding of the UvrA(2)B(2) complex to a putative damaged site, the DNA wraps around one UvrB monomer. DNA wrap is dependent on ATP binding by UvrB and probably causes local melting of the DNA helix, facilitating insertion of UvrB beta-hairpin between the DNA strands. Then UvrB probes one DNA strand for the presence of a lesion. If a lesion is found the UvrA subunits dissociate and the UvrB-DNA preincision complex is formed. This complex is subsequently bound by UvrC and the second UvrB is released. If no lesion is found, the DNA wraps around the other UvrB subunit that will check the other stand for damage. The polypeptide is UvrABC system protein B (Leptospira interrogans serogroup Icterohaemorrhagiae serovar copenhageni (strain Fiocruz L1-130)).